Consider the following 161-residue polypeptide: MSQLTHINAAGEAHMVDVSAKAETVREARAEAFVTMRSETLAMIIDGRHHKGDVFATARIVGIQAAKRTWDLIPLCHPLMLSKVEVNLQAEPEHNRVRIETLCRLTGKTGVEMEALTAASVAALTIYDMCKAVQKDMVIGPVRLLAKSGGKSGDFKVEADD.

Substrate is bound by residues 75–77 (LCH) and 113–114 (ME). The active site involves Asp-128.

This sequence belongs to the MoaC family. As to quaternary structure, homohexamer; trimer of dimers.

The enzyme catalyses (8S)-3',8-cyclo-7,8-dihydroguanosine 5'-triphosphate = cyclic pyranopterin phosphate + diphosphate. The protein operates within cofactor biosynthesis; molybdopterin biosynthesis. Its function is as follows. Catalyzes the conversion of (8S)-3',8-cyclo-7,8-dihydroguanosine 5'-triphosphate to cyclic pyranopterin monophosphate (cPMP). This Shigella sonnei (strain Ss046) protein is Cyclic pyranopterin monophosphate synthase.